Here is a 151-residue protein sequence, read N- to C-terminus: uncharacterized protein (151 aa).

The segment at 1–24 is disordered; the sequence is MHAKTKKLGTDTSYKRPQVTAQEQ.

This is an uncharacterized protein from Acanthamoeba polyphaga mimivirus (APMV).